Here is an 870-residue protein sequence, read N- to C-terminus: Lysosomal cholesterol signaling protein (870 aa).

Over Met1–Ser38 the chain is Lumenal. The PIN-like transporter stretch occupies residues Met1–Met370. 3 N-linked (GlcNAc...) asparagine glycosylation sites follow: Asn9, Asn15, and Asn29. A helical transmembrane segment spans residues Ile39–Ala59. Cholesterol is bound by residues Phe43 and Tyr57. The Cytoplasmic portion of the chain corresponds to Gly60 to Arg79. Residues Phe80–Trp100 form a helical membrane-spanning segment. Residues Ser101–Tyr104 are Lumenal-facing. Residues Ser105–Ala125 form a helical membrane-spanning segment. The Cytoplasmic segment spans residues Ser126–Lys133. A discontinuously helical membrane pass occupies residues Ala134–Val154. The Lumenal segment spans residues Glu155–Gln167. Residues Tyr168–Cys188 form a helical membrane-spanning segment. At Glu189 to Arg213 the chain is on the cytoplasmic side. A discontinuously helical transmembrane segment spans residues Val214–Asp234. Residues Arg235–Asn243 are Lumenal-facing. A discontinuously helical membrane pass occupies residues Phe244 to Met264. The Cytoplasmic portion of the chain corresponds to Val265–Lys273. 3 residues coordinate cholesterol: Gly266, Lys267, and Ile268. The helical transmembrane segment at Ser274–Cys294 threads the bilayer. Residues Arg295–Asn315 are Lumenal-facing. The N-linked (GlcNAc...) asparagine glycan is linked to Asn309. A discontinuously helical membrane pass occupies residues Tyr316–Phe336. Topologically, residues Asn337–Gly346 are cytoplasmic. Residues Met347–Phe367 traverse the membrane as a helical segment. Topologically, residues Pro368–Asn381 are lumenal. The segment at Gln380 to Leu717 is GPCR. A glycan (N-linked (GlcNAc...) asparagine) is linked at Asn381. The helical transmembrane segment at Val382 to Leu402 threads the bilayer. At Leu403–Leu414 the chain is on the cytoplasmic side. Residues Thr415–Val435 form a helical membrane-spanning segment. Residues Lys436–Lys438 are Lumenal-facing. Residues Asn439–Leu459 traverse the membrane as a helical segment. The Cytoplasmic segment spans residues Trp460–Pro480. The helical transmembrane segment at Val481–Ile501 threads the bilayer. At Thr502 to Gln520 the chain is on the lumenal side. A helical membrane pass occupies residues Met521–Cys541. At Met542–Leu660 the chain is on the cytoplasmic side. Arg657 is a binding site for cholesterol. Residues Leu661–Phe681 form a helical membrane-spanning segment. At Asn682–Glu691 the chain is on the lumenal side. Residues Leu692–Gly712 form a helical membrane-spanning segment. Residues Leu713–Thr870 are Cytoplasmic-facing. The DEP domain maps to Tyr757 to Gln835.

As to quaternary structure, homodimer; via the transporter region and DEP domain. Interacts with the GATOR1 complex and prevents interaction between GATOR1 and KICSTOR; this interaction is disrupted upon cholesterol starvation.

Its subcellular location is the lysosome membrane. In terms of biological role, cholesterol-binding protein that acts as a regulator of mTORC1 signaling pathway. Acts as a sensor of cholesterol to signal cholesterol sufficiency to mTORC1: in presence of cholesterol, binds cholesterol, leading to disruption of the interaction between the GATOR1 and KICSTOR complexes and promotion of mTORC1 signaling. Upon cholesterol starvation, GPR155/LYCHOS is unable to perturb the association between GATOR1 and KICSTOR, leading to mTORC1 signaling inhibition. Binds indole-3-acetic acid and may play a role in tryptophan metabolism. This Homo sapiens (Human) protein is Lysosomal cholesterol signaling protein.